The chain runs to 345 residues: NADH-quinone oxidoreductase subunit H (345 aa).

8 helical membrane-spanning segments follow: residues 9–29 (ALGA…LVFA), 82–102 (VVMV…EGVV), 108–128 (VGVI…TLAG), 154–174 (MGLA…MEIV), 183–203 (LLGW…VTAF), 241–261 (YVNW…GYLV), 282–302 (LLQF…FIWV), and 325–345 (IALA…AVGL).

It belongs to the complex I subunit 1 family. As to quaternary structure, NDH-1 is composed of 14 different subunits. Subunits NuoA, H, J, K, L, M, N constitute the membrane sector of the complex.

The protein localises to the cell inner membrane. It catalyses the reaction a quinone + NADH + 5 H(+)(in) = a quinol + NAD(+) + 4 H(+)(out). In terms of biological role, NDH-1 shuttles electrons from NADH, via FMN and iron-sulfur (Fe-S) centers, to quinones in the respiratory chain. The immediate electron acceptor for the enzyme in this species is believed to be ubiquinone. Couples the redox reaction to proton translocation (for every two electrons transferred, four hydrogen ions are translocated across the cytoplasmic membrane), and thus conserves the redox energy in a proton gradient. This subunit may bind ubiquinone. The chain is NADH-quinone oxidoreductase subunit H from Salinibacter ruber (strain DSM 13855 / M31).